A 486-amino-acid chain; its full sequence is Cobyric acid synthase (486 aa).

The region spanning 248-439 (VLRIVVPALP…LHGLFDTPHA (192 aa)) is the GATase cobBQ-type domain. Cysteine 328 functions as the Nucleophile in the catalytic mechanism. Residue histidine 431 is part of the active site.

It belongs to the CobB/CobQ family. CobQ subfamily.

Its pathway is cofactor biosynthesis; adenosylcobalamin biosynthesis. Its function is as follows. Catalyzes amidations at positions B, D, E, and G on adenosylcobyrinic A,C-diamide. NH(2) groups are provided by glutamine, and one molecule of ATP is hydrogenolyzed for each amidation. This chain is Cobyric acid synthase, found in Burkholderia mallei (strain ATCC 23344).